Reading from the N-terminus, the 67-residue chain is Large ribosomal subunit protein bL31 (67 aa).

Belongs to the bacterial ribosomal protein bL31 family. Type A subfamily. In terms of assembly, part of the 50S ribosomal subunit.

Its function is as follows. Binds the 23S rRNA. In Wolinella succinogenes (strain ATCC 29543 / DSM 1740 / CCUG 13145 / JCM 31913 / LMG 7466 / NCTC 11488 / FDC 602W) (Vibrio succinogenes), this protein is Large ribosomal subunit protein bL31.